The chain runs to 319 residues: ATP-dependent 6-phosphofructokinase (319 aa).

Residue G11 coordinates ATP. Residue 21–25 (RAVVR) participates in ADP binding. ATP is bound by residues 72-73 (RC) and 102-105 (GEGS). E103 provides a ligand contact to Mg(2+). 126 to 128 (TID) is a binding site for substrate. The active-site Proton acceptor is D128. An ADP-binding site is contributed by K155. Substrate is bound by residues R163 and 170–172 (MGR). ADP-binding positions include 186-188 (GAE), R212, and 214-216 (KIN). Substrate contacts are provided by residues E223, R244, and 250 to 253 (HVQR).

It belongs to the phosphofructokinase type A (PFKA) family. ATP-dependent PFK group I subfamily. Prokaryotic clade 'B1' sub-subfamily. As to quaternary structure, homotetramer. Mg(2+) serves as cofactor.

Its subcellular location is the cytoplasm. It carries out the reaction beta-D-fructose 6-phosphate + ATP = beta-D-fructose 1,6-bisphosphate + ADP + H(+). Its pathway is carbohydrate degradation; glycolysis; D-glyceraldehyde 3-phosphate and glycerone phosphate from D-glucose: step 3/4. Allosterically activated by ADP and other diphosphonucleosides, and allosterically inhibited by phosphoenolpyruvate. Catalyzes the phosphorylation of D-fructose 6-phosphate to fructose 1,6-bisphosphate by ATP, the first committing step of glycolysis. The chain is ATP-dependent 6-phosphofructokinase from Thermotoga neapolitana (strain ATCC 49049 / DSM 4359 / NBRC 107923 / NS-E).